The primary structure comprises 566 residues: Cyclin G (566 aa).

The region spanning 285-368 is the Cyclin N-terminal domain; the sequence is MWYELPSDVL…VIANKLGVQM (84 aa).

The protein belongs to the cyclin family. Cyclin G subfamily. In terms of assembly, interacts with corto. Interacts with the cyclin-dependent kinases Cdk2 and Cdk4. Interacts with Brca2 and Rad9. Interacts with polycomb protein Asx. Interacts with protein phosphatase 2A subunit wdb.

It is found in the chromosome. In terms of biological role, cyclin with roles in multiple processes including transcription, meiotic recombination repair, cell cycle regulation, and promotion of normal growth and metabolism. Binds to the promoter region of the homeobox gene Abd-B and is involved in maintaining Abd-B expression in the pupal epithelium. Involved in the transcriptional repression of the homeotic genes Scr and Ubx. Plays a role in meiotic recombination repair of DNA double-strand breaks which ensures efficient translation of grk and promotes grk activity in the oocyte, leading to oocyte dorso-ventral axis formation following secretion of grk from the oocyte and its binding to Egfr in the directly overlying follicle cells. Negatively regulates the binding of serine/threonine-protein kinase Akt1 to the protein phosphatase 2A subunit wdb, promoting normal growth and metabolism. Required for the formation of bilateral symmetry. Negatively regulates cell cycle progression by preventing G1 to S transition and retarding S-phase progression. The polypeptide is Cyclin G (Drosophila melanogaster (Fruit fly)).